The following is a 99-amino-acid chain: Protein Tat (99 aa).

Residues 1–24 (MDPVDPKLEPWNHPGSQPQTACNN) form an interaction with human CREBBP region. Positions 1–48 (MDPVDPKLEPWNHPGSQPQTACNNCYCKKCCYHCQMCFLKKGLGISYG) are transactivation. The Zn(2+) site is built by Cys-22, Cys-25, and Cys-27. A cysteine-rich region spans residues 22 to 37 (CNNCYCKKCCYHCQMC). An N6-acetyllysine; by host PCAF modification is found at Lys-28. Zn(2+) is bound by residues Cys-30, His-33, Cys-34, and Cys-37. Positions 38-48 (FLKKGLGISYG) are core. Basic residues predominate over residues 48–58 (GRKKRSQRHRT). The segment at 48–99 (GRKKRSQRHRTPASLQDHQNSISKQPLSRTHGDPTGPKEQKKEVASKTETDP) is disordered. The Nuclear localization signal, RNA-binding (TAR), and protein transduction motif lies at 49-57 (RKKRSQRHR). The segment at 49 to 86 (RKKRSQRHRTPASLQDHQNSISKQPLSRTHGDPTGPKE) is interaction with the host capping enzyme RNGTT. An N6-acetyllysine; by host EP300 and GCN5L2 mark is found at Lys-50 and Lys-51. Arg-52 is subject to Asymmetric dimethylarginine; by host PRMT6. Polar residues predominate over residues 60 to 75 (ASLQDHQNSISKQPLS). A Glycyl lysine isopeptide (Lys-Gly) (interchain with G-Cter in ubiquitin) cross-link involves residue Lys-71. A compositionally biased stretch (basic and acidic residues) spans 77–99 (THGDPTGPKEQKKEVASKTETDP).

It belongs to the lentiviruses Tat family. As to quaternary structure, interacts with host CCNT1. Associates with the P-TEFb complex composed at least of Tat, P-TEFb (CDK9 and CCNT1), TAR RNA, RNA Pol II. Recruits the HATs CREBBP, TAF1/TFIID, EP300, PCAF and GCN5L2. Interacts with host KAT5/Tip60; this interaction targets the latter to degradation. Interacts with the host deacetylase SIRT1. Interacts with host capping enzyme RNGTT; this interaction stimulates RNGTT. Binds to host KDR, and to the host integrins ITGAV/ITGB3 and ITGA5/ITGB1. Interacts with host KPNB1/importin beta-1 without previous binding to KPNA1/importin alpha-1. Interacts with EIF2AK2. Interacts with host nucleosome assembly protein NAP1L1; this interaction may be required for the transport of Tat within the nucleus, since the two proteins interact at the nuclear rim. Interacts with host C1QBP/SF2P32; this interaction involves lysine-acetylated Tat. Interacts with the host chemokine receptors CCR2, CCR3 and CXCR4. Interacts with host DPP4/CD26; this interaction may trigger an anti-proliferative effect. Interacts with host LDLR. Interacts with the host extracellular matrix metalloproteinase MMP1. Interacts with host PRMT6; this interaction mediates Tat's methylation. Interacts with, and is ubiquitinated by MDM2/Hdm2. Interacts with host PSMC3 and HTATIP2. Interacts with STAB1; this interaction may overcome SATB1-mediated repression of IL2 and IL2RA (interleukin) in T cells by binding to the same domain than HDAC1. Interacts (when acetylated) with human CDK13, thereby increasing HIV-1 mRNA splicing and promoting the production of the doubly spliced HIV-1 protein Nef. Interacts with host TBP; this interaction modulates the activity of transcriptional pre-initiation complex. Interacts with host RELA. Interacts with host PLSCR1; this interaction negatively regulates Tat transactivation activity by altering its subcellular distribution. In terms of processing, asymmetrical arginine methylation by host PRMT6 seems to diminish the transactivation capacity of Tat and affects the interaction with host CCNT1. Acetylation by EP300, CREBBP, GCN5L2/GCN5 and PCAF regulates the transactivation activity of Tat. EP300-mediated acetylation of Lys-50 promotes dissociation of Tat from the TAR RNA through the competitive binding to PCAF's bromodomain. In addition, the non-acetylated Tat's N-terminus can also interact with PCAF. PCAF-mediated acetylation of Lys-28 enhances Tat's binding to CCNT1. Lys-50 is deacetylated by SIRT1. Post-translationally, polyubiquitination by host MDM2 does not target Tat to degradation, but activates its transactivation function and fosters interaction with CCNT1 and TAR RNA. In terms of processing, phosphorylated by EIF2AK2 on serine and threonine residues adjacent to the basic region important for TAR RNA binding and function. Phosphorylation of Tat by EIF2AK2 is dependent on the prior activation of EIF2AK2 by dsRNA.

The protein localises to the host nucleus. Its subcellular location is the host nucleolus. It localises to the host cytoplasm. The protein resides in the secreted. Its function is as follows. Transcriptional activator that increases RNA Pol II processivity, thereby increasing the level of full-length viral transcripts. Recognizes a hairpin structure at the 5'-LTR of the nascent viral mRNAs referred to as the transactivation responsive RNA element (TAR) and recruits the cyclin T1-CDK9 complex (P-TEFb complex) that will in turn hyperphosphorylate the RNA polymerase II to allow efficient elongation. The CDK9 component of P-TEFb and other Tat-activated kinases hyperphosphorylate the C-terminus of RNA Pol II that becomes stabilized and much more processive. Other factors such as HTATSF1/Tat-SF1, SUPT5H/SPT5, and HTATIP2 are also important for Tat's function. Besides its effect on RNA Pol II processivity, Tat induces chromatin remodeling of proviral genes by recruiting the histone acetyltransferases (HATs) CREBBP, EP300 and PCAF to the chromatin. This also contributes to the increase in proviral transcription rate, especially when the provirus integrates in transcriptionally silent region of the host genome. To ensure maximal activation of the LTR, Tat mediates nuclear translocation of NF-kappa-B by interacting with host RELA. Through its interaction with host TBP, Tat may also modulate transcription initiation. Tat can reactivate a latently infected cell by penetrating in it and transactivating its LTR promoter. In the cytoplasm, Tat is thought to act as a translational activator of HIV-1 mRNAs. Functionally, extracellular circulating Tat can be endocytosed by surrounding uninfected cells via the binding to several surface receptors such as CD26, CXCR4, heparan sulfate proteoglycans (HSPG) or LDLR. Neurons are rarely infected, but they internalize Tat via their LDLR. Through its interaction with nuclear HATs, Tat is potentially able to control the acetylation-dependent cellular gene expression. Modulates the expression of many cellular genes involved in cell survival, proliferation or in coding for cytokines or cytokine receptors. Tat plays a role in T-cell and neurons apoptosis. Tat induced neurotoxicity and apoptosis probably contribute to neuroAIDS. Circulating Tat also acts as a chemokine-like and/or growth factor-like molecule that binds to specific receptors on the surface of the cells, affecting many cellular pathways. In the vascular system, Tat binds to ITGAV/ITGB3 and ITGA5/ITGB1 integrins dimers at the surface of endothelial cells and competes with bFGF for heparin-binding sites, leading to an excess of soluble bFGF. The sequence is that of Protein Tat from Homo sapiens (Human).